The following is a 247-amino-acid chain: E3 ubiquitin-protein ligase RNF182 (247 aa).

The RING-type zinc-finger motif lies at 20-68 (CKICYNRYNLKQRKPKVLECCHRVCAKCLYKIIDFGDSPQGVIVCPFCR). 2 helical membrane passes run 184-204 (VLVWLLGLLYFSSLPLGIYLL) and 211-231 (LGVVFVSLVPSSLVILMVYGF).

In terms of assembly, interacts with ATP6V0C.

The protein resides in the membrane. It localises to the cytoplasm. The enzyme catalyses S-ubiquitinyl-[E2 ubiquitin-conjugating enzyme]-L-cysteine + [acceptor protein]-L-lysine = [E2 ubiquitin-conjugating enzyme]-L-cysteine + N(6)-ubiquitinyl-[acceptor protein]-L-lysine.. It functions in the pathway protein modification; protein ubiquitination. E3 ubiquitin-protein ligase that mediates the ubiquitination of ATP6V0C and targets it to degradation via the ubiquitin-proteasome pathway. Also plays a role in the inhibition of TLR-triggered innate immune response by mediating 'Lys'-48-linked ubiquitination and subsequent degradation of NF-kappa-B component RELA. The protein is E3 ubiquitin-protein ligase RNF182 (Rnf182) of Rattus norvegicus (Rat).